The primary structure comprises 45 residues: Metallothionein-like protein 1A (45 aa).

This sequence belongs to the metallothionein superfamily. Type 15 family. In terms of tissue distribution, expressed in phloem and mesophyll cells of leaves, vascular tissues of cotyledons, sepals and petals. Expressed in anthers. Expressed in root endodermis and at lower levels in cortex of mature region of roots.

Its function is as follows. Metallothioneins have a high content of cysteine residues that bind various heavy metals. Functions as a metal chelator of copper (Cu) and zinc (Zn). Plays a role in Cu homeostasis in the roots under elevated Cu concentration. Functions cooperatively with the phytochelatin synthase PCS1 to protect plants from Cu and cadmium (Cd) toxicity. Plays a role in Cu homeostasis, specifically in the remobilization of Cu from senescing leaves. The mobilization of Cu from internal sources is important for seed development. Confers tolerance to Cd and plays a role in Cd and Zn homeostasis. This chain is Metallothionein-like protein 1A (MT1A), found in Arabidopsis thaliana (Mouse-ear cress).